The following is a 325-amino-acid chain: Fatty acid synthase alpha subunit hexA (325 aa).

Aspartate 209 is a binding site for Mg(2+). Residues 209 to 211 (DLV), 255 to 265 (EAVFKCLHTQT), 279 to 282 (KSDN), and 301 to 303 (ISH) contribute to the acetyl-CoA site. Mg(2+) is bound at residue serine 302.

This sequence belongs to the thiolase-like superfamily. Fungal fatty acid synthetase subunit alpha family. In terms of assembly, [Alpha(6)beta(6)] hexamers of two multifunctional subunits (alpha and beta). Post-translationally, 4'-phosphopantetheine is transferred from CoA to a specific serine of the acyl carrier domain by the C-terminal PPT domain. This modification is essential for activity because fatty acids are bound in thioester linkage to the sulfhydryl of the prosthetic group.

It catalyses the reaction acetyl-CoA + n malonyl-CoA + 2n NADPH + 4n H(+) = a long-chain-acyl-CoA + n CoA + n CO2 + 2n NADP(+).. The catalysed reaction is a fatty acyl-[ACP] + malonyl-[ACP] + H(+) = a 3-oxoacyl-[ACP] + holo-[ACP] + CO2. The enzyme catalyses a (3R)-hydroxyacyl-[ACP] + NADP(+) = a 3-oxoacyl-[ACP] + NADPH + H(+). It participates in mycotoxin biosynthesis. Functionally, fatty acid synthase alpha subunit; part of the fragmented gene cluster that mediates the biosynthesis of dothistromin (DOTH), a polyketide toxin very similar in structure to the aflatoxin precursor, versicolorin B. The first step of the pathway is the conversion of acetate to norsolorinic acid (NOR) and requires the fatty acid synthase subunits hexA and hexB, as well as the polyketide synthase pksA. PksA combines a hexanoyl starter unit and 7 malonyl-CoA extender units to synthesize the precursor NOR. The hexanoyl starter unit is provided to the acyl-carrier protein (ACP) domain by the fungal fatty acid synthase hexA/hexB. The second step is the conversion of NOR to averantin (AVN) and requires the norsolorinic acid ketoreductase nor1, which catalyzes the dehydration of norsolorinic acid to form (1'S)-averantin. The cytochrome P450 monooxygenase avnA then catalyzes the hydroxylation of AVN to 5'hydroxyaverantin (HAVN). The next step is performed by adhA that transforms HAVN to averufin (AVF). Averufin might then be converted to hydroxyversicolorone by cypX and avfA. Hydroxyversicolorone is further converted versiconal hemiacetal acetate (VHA) by moxY. VHA is then the substrate for the versiconal hemiacetal acetate esterase est1 to yield versiconal (VAL). Versicolorin B synthase vbsA then converts VAL to versicolorin B (VERB) by closing the bisfuran ring. Then, the activity of the versicolorin B desaturase verB leads to versicolorin A (VERA). DotB, a predicted chloroperoxidase, may perform epoxidation of the A-ring of VERA. Alternatively, a cytochrome P450, such as cypX or avnA could catalyze this step. It is also possible that another, uncharacterized, cytochrome P450 enzyme is responsible for this step. Opening of the epoxide could potentially be achieved by the epoxide hydrolase epoA. However, epoA seems not to be required for DOTH biosynthesis, but other epoxide hydrolases may have the ability to complement this hydrolysis. Alternatively, opening of the epoxide ring could be achieved non-enzymatically. The next step is the deoxygenation of ring A to yield the 5,8-dihydroxyanthraquinone which is most likely catalyzed by the NADPH dehydrogenase encoded by ver1. The last stages of DOTH biosynthesis are proposed to involve hydroxylation of the bisfuran. OrdB and norB might have oxidative roles here. An alternative possibility is that cytochrome P450 monoogenases such as avnA and cypX might perform these steps in addition to previously proposed steps. The protein is Fatty acid synthase alpha subunit hexA of Dothistroma septosporum (Red band needle blight fungus).